The sequence spans 426 residues: Selenate reductase subunit C (426 aa).

10 consecutive transmembrane segments (helical) span residues Leu5–Leu25, Trp40–Leu60, Leu78–Leu98, Trp119–Met139, Ile187–Phe207, Ile223–Phe243, Leu261–Leu281, Phe302–Ile322, Met330–Ile350, and Val385–Phe405.

The protein belongs to the NrfD family. The complex is composed of three subunits: SrdA, SrdB and SrdC.

Its subcellular location is the cell membrane. It carries out the reaction selenite + a quinone + H2O = selenate + a quinol. Component of the respiratory selenate reductase complex, which catalyzes the reduction of selenate to selenite. This subunit probably receives electrons directly from the membrane quinone pool and transfers the electrons to the iron-sulfur clusters of SrdB. May be the membrane anchor protein subunit of the complex. This Mesobacillus selenatarsenatis (strain DSM 18680 / JCM 14380 / FERM P-15431 / SF-1) protein is Selenate reductase subunit C.